The sequence spans 374 residues: Chaperone protein DnaJ (374 aa).

A J domain is found at 4-68; it reads DYYEILGVSR…ETRNRYDRFG (65 aa). The CR-type zinc-finger motif lies at 133–215; it reads GGEKEIRIRH…CGGSGRRQET (83 aa). Residues C146, C149, C163, C166, C189, C192, C203, and C206 each coordinate Zn(2+). CXXCXGXG motif repeat units lie at residues 146 to 153, 163 to 170, 189 to 196, and 203 to 210; these read CQTCKGSG, CTTCSGTG, CPTCDGAG, and CDVCGGSG.

This sequence belongs to the DnaJ family. As to quaternary structure, homodimer. Zn(2+) is required as a cofactor.

The protein resides in the cytoplasm. Participates actively in the response to hyperosmotic and heat shock by preventing the aggregation of stress-denatured proteins and by disaggregating proteins, also in an autonomous, DnaK-independent fashion. Unfolded proteins bind initially to DnaJ; upon interaction with the DnaJ-bound protein, DnaK hydrolyzes its bound ATP, resulting in the formation of a stable complex. GrpE releases ADP from DnaK; ATP binding to DnaK triggers the release of the substrate protein, thus completing the reaction cycle. Several rounds of ATP-dependent interactions between DnaJ, DnaK and GrpE are required for fully efficient folding. Also involved, together with DnaK and GrpE, in the DNA replication of plasmids through activation of initiation proteins. This is Chaperone protein DnaJ from Microcystis aeruginosa (strain NIES-843 / IAM M-2473).